A 782-amino-acid chain; its full sequence is General transcription and DNA repair factor IIH helicase/translocase subunit XPB (782 aa).

Residues 1–11 (MGKRDRADREK) show a composition bias toward basic and acidic residues. Positions 1 to 51 (MGKRDRADREKKKSKKRHYEDEEDEEDDAPGNDTQEAVPSAAGKQVDESGT) are disordered. A Nuclear localization signal motif is present at residues 6 to 18 (RADREKKKSKKRH). The span at 21 to 30 (DEEDEEDDAP) shows a compositional bias: acidic residues. Residues 327–488 (MFGNGRARSG…DLNFLIGPKL (162 aa)) enclose the Helicase ATP-binding domain. Position 340-347 (340-347 (LPCGAGKS)) interacts with ATP. The DEVH box signature appears at 441-444 (DEVH). One can recognise a Helicase C-terminal domain in the interval 542-702 (RACQFLIKFH…LAGMEEEDLA (161 aa)). Serine 686 carries the post-translational modification Phosphoserine. At serine 751 the chain carries Phosphoserine; by CK2.

Belongs to the helicase family. RAD25/XPB subfamily. Component of the 7-subunit TFIIH core complex composed of XPB/ERCC3, XPD/ERCC2, GTF2H1, GTF2H2, GTF2H3, GTF2H4 and GTF2H5, which is active in NER. The core complex associates with the 3-subunit CDK-activating kinase (CAK) module composed of CCNH/cyclin H, CDK7 and MNAT1 to form the 10-subunit holoenzyme (holo-TFIIH) active in transcription. Interacts with PUF60. Interacts with ATF7IP. Interacts with KAT2A; leading to KAT2A recruitment to promoters and acetylation of histones. Part of TBP-based Pol II pre-initiation complex (PIC), in which Pol II core assembles with general transcription factors and other specific initiation factors including GTF2E1, GTF2E2, GTF2F1, GTF2F2, TCEA1, ERCC2, ERCC3, GTF2H2, GTF2H3, GTF2H4, GTF2H5, GTF2A1, GTF2A2, GTF2B and TBP; this large multi-subunit PIC complex mediates DNA unwinding and targets Pol II core to the transcription start site where the first phosphodiester bond forms. In terms of processing, phosphorylation on Ser-751 by CK2 controls the 5'-excision activity of ERCC1-XPF endonuclease; phosphorylated protein inhibits the excision activity and thus NER. Dephosphorylation reactivates the 5'-excision step. Phosphorylation has no effect on transcription or the 3'-5' helicase activity.

Its subcellular location is the nucleus. It catalyses the reaction Couples ATP hydrolysis with the unwinding of duplex DNA by translocating in the 3'-5' direction.. The catalysed reaction is ATP + H2O = ADP + phosphate + H(+). Phosphorylation on Ser-751 by CK2 controls the 5'-excision activity of ERCC1-XPF endonuclease; phosphorylated protein inhibits the excision activity and thus NER. ATPase activity is stimulated by TFIIH subunit p52 (GTF2H4). DNA translocase activity by this subunit in TFIIH is stimulated by XPA, ERCC5/XPG and XFP plus ERCC1. Its function is as follows. ATP-dependent 3'-5' DNA helicase/translocase; binds dsDNA rather than ssDNA, unzipping it in a translocase rather than classical helicase activity. Component of the general transcription and DNA repair factor IIH (TFIIH) core complex. When complexed to CDK-activating kinase (CAK), involved in RNA transcription by RNA polymerase II. The ATPase activity of XPB/ERCC3, but not its helicase activity, is required for DNA opening; it may wrap around the damaged DNA wedging it open, causing localized melting and twisting that allows XPD/ERCC2 helicase to anchor. The ATP-dependent helicase activity of XPB/ERCC3 may be required for promoter escape. Also involved in transcription-coupled nucleotide excision repair (NER) of damaged DNA. In NER, TFIIH acts by opening DNA around the lesion to allow the excision of the damaged oligonucleotide and its replacement by a new DNA fragment. The structure of the TFIIH transcription complex differs from the NER-TFIIH complex; large movements by XPD/ERCC2 and XPB/ERCC3 are stabilized by XPA. The polypeptide is General transcription and DNA repair factor IIH helicase/translocase subunit XPB (ERCC3) (Bos taurus (Bovine)).